A 572-amino-acid polypeptide reads, in one-letter code: Proline--tRNA ligase (572 aa).

The protein belongs to the class-II aminoacyl-tRNA synthetase family. ProS type 1 subfamily. In terms of assembly, homodimer.

Its subcellular location is the cytoplasm. The enzyme catalyses tRNA(Pro) + L-proline + ATP = L-prolyl-tRNA(Pro) + AMP + diphosphate. In terms of biological role, catalyzes the attachment of proline to tRNA(Pro) in a two-step reaction: proline is first activated by ATP to form Pro-AMP and then transferred to the acceptor end of tRNA(Pro). As ProRS can inadvertently accommodate and process non-cognate amino acids such as alanine and cysteine, to avoid such errors it has two additional distinct editing activities against alanine. One activity is designated as 'pretransfer' editing and involves the tRNA(Pro)-independent hydrolysis of activated Ala-AMP. The other activity is designated 'posttransfer' editing and involves deacylation of mischarged Ala-tRNA(Pro). The misacylated Cys-tRNA(Pro) is not edited by ProRS. This chain is Proline--tRNA ligase, found in Bacillus licheniformis (strain ATCC 14580 / DSM 13 / JCM 2505 / CCUG 7422 / NBRC 12200 / NCIMB 9375 / NCTC 10341 / NRRL NRS-1264 / Gibson 46).